Here is a 135-residue protein sequence, read N- to C-terminus: Small ribosomal subunit protein uS9 (135 aa).

Basic and acidic residues predominate over residues 108–118 (VGDPRRTEPHK). A disordered region spans residues 108-135 (VGDPRRTEPHKPNRSTKGPRAKRQKSYR). Residues 119–135 (PNRSTKGPRAKRQKSYR) are compositionally biased toward basic residues.

Belongs to the universal ribosomal protein uS9 family.

The sequence is that of Small ribosomal subunit protein uS9 (rps9) from Pyrococcus abyssi (strain GE5 / Orsay).